The sequence spans 386 residues: Meiotic chromosome segregation protein C1539.02 (386 aa).

Disordered regions lie at residues 1 to 28 (MNQDDFRKLLATPKAETSQLKNFSSNKS), 46 to 85 (RALIKRKQLSHSTSSDITRHSNAKNSGKDTQFYEEPSSKQ), and 366 to 386 (DIHELGESDDDDNVKRRKTKG). The span at 15-28 (AETSQLKNFSSNKS) shows a compositional bias: polar residues.

It localises to the nucleus. In terms of biological role, required for meiotic chromosome segregation. The chain is Meiotic chromosome segregation protein C1539.02 from Schizosaccharomyces pombe (strain 972 / ATCC 24843) (Fission yeast).